The sequence spans 126 residues: Aspartate 1-decarboxylase (126 aa).

The Schiff-base intermediate with substrate; via pyruvic acid role is filled by serine 25. Serine 25 carries the post-translational modification Pyruvic acid (Ser). A substrate-binding site is contributed by threonine 57. The active-site Proton donor is tyrosine 58. 73–75 (GGA) is a binding site for substrate.

This sequence belongs to the PanD family. Heterooctamer of four alpha and four beta subunits. Requires pyruvate as cofactor. Is synthesized initially as an inactive proenzyme, which is activated by self-cleavage at a specific serine bond to produce a beta-subunit with a hydroxyl group at its C-terminus and an alpha-subunit with a pyruvoyl group at its N-terminus.

It localises to the cytoplasm. It carries out the reaction L-aspartate + H(+) = beta-alanine + CO2. It functions in the pathway cofactor biosynthesis; (R)-pantothenate biosynthesis; beta-alanine from L-aspartate: step 1/1. Functionally, catalyzes the pyruvoyl-dependent decarboxylation of aspartate to produce beta-alanine. This chain is Aspartate 1-decarboxylase, found in Xanthomonas axonopodis pv. citri (strain 306).